Reading from the N-terminus, the 240-residue chain is 1-(5-phosphoribosyl)-5-[(5-phosphoribosylamino)methylideneamino] imidazole-4-carboxamide isomerase (240 aa).

D9 (proton acceptor) is an active-site residue. D131 (proton donor) is an active-site residue.

It belongs to the HisA/HisF family.

It localises to the cytoplasm. The enzyme catalyses 1-(5-phospho-beta-D-ribosyl)-5-[(5-phospho-beta-D-ribosylamino)methylideneamino]imidazole-4-carboxamide = 5-[(5-phospho-1-deoxy-D-ribulos-1-ylimino)methylamino]-1-(5-phospho-beta-D-ribosyl)imidazole-4-carboxamide. It participates in amino-acid biosynthesis; L-histidine biosynthesis; L-histidine from 5-phospho-alpha-D-ribose 1-diphosphate: step 4/9. This is 1-(5-phosphoribosyl)-5-[(5-phosphoribosylamino)methylideneamino] imidazole-4-carboxamide isomerase from Cytophaga hutchinsonii (strain ATCC 33406 / DSM 1761 / CIP 103989 / NBRC 15051 / NCIMB 9469 / D465).